A 369-amino-acid chain; its full sequence is MLLFTPGPVAINEEMRSSFSQPMPHHRTKDFEKIFQSVRENLKKMTGLEEVLLLSSSGTGAMEASVISLCQKELLFVNAGKFGERFGKIAKAHSIKAHELVYEWDTPAQVDGILNALKANPNIDAFCIQACESSGGLRHPVEKIAQAIKETNPNVFVIVDAITALGVEPLEITHVDALIGGSQKAFMLPPAMSLIALSQKAIDRIEERNVGFYFNLKSELKNQKNNTTSYTAPILHTLGLQRYFELVQNLGGFEALYQETKRVALASQKAVLALGLKIFPKSPSLSMTTIVSEHAKELKNLLKEKYQVQFAGGQEPYKDTLIRINHMGIIPVYKSAYALNALELALNDLDLREFDGMANTTFLKQYYEI.

N6-(pyridoxal phosphate)lysine is present on K184.

It belongs to the class-V pyridoxal-phosphate-dependent aminotransferase family. Requires pyridoxal 5'-phosphate as cofactor.

This is an uncharacterized protein from Helicobacter pylori (strain J99 / ATCC 700824) (Campylobacter pylori J99).